The following is a 943-amino-acid chain: AP-1 complex subunit beta-1 (943 aa).

Lysine 318 carries the N6-acetyllysine modification. Tyrosine 574 is subject to 3'-nitrotyrosine. The disordered stretch occupies residues 584–621; the sequence is GGRGVVHKSLPPRTASSESTESPETAPAGAPAGDQPDV. The segment covering 594–616 has biased composition (low complexity); that stretch reads PPRTASSESTESPETAPAGAPAG.

This sequence belongs to the adaptor complexes large subunit family. In terms of assembly, adaptor protein complex 1 (AP-1) is a heterotetramer composed of two large adaptins (gamma-type subunit AP1G1 and beta-type subunit AP1B1), a medium adaptin (mu-type subunit AP1M1 or AP1M2) and a small adaptin (sigma-type subunit AP1S1 or AP1S2 or AP1S3). In terms of tissue distribution, widely expressed.

It localises to the cytoplasmic vesicle. Its subcellular location is the clathrin-coated vesicle membrane. The protein resides in the golgi apparatus. In terms of biological role, subunit of clathrin-associated adaptor protein complex 1 that plays a role in protein sorting in the late-Golgi/trans-Golgi network (TGN) and/or endosomes. The AP complexes mediate both the recruitment of clathrin to membranes and the recognition of sorting signals within the cytosolic tails of transmembrane cargo molecules. This is AP-1 complex subunit beta-1 (Ap1b1) from Mus musculus (Mouse).